The chain runs to 148 residues: UPF0756 membrane protein YeaL (148 aa).

Helical transmembrane passes span 14–34, 51–71, 80–100, and 121–141; these read ALGF…LIIV, LTIG…SGSL, FFNW…WLGG, and VLGV…AGLV.

It belongs to the UPF0756 family.

It is found in the cell membrane. The sequence is that of UPF0756 membrane protein YeaL from Escherichia fergusonii (strain ATCC 35469 / DSM 13698 / CCUG 18766 / IAM 14443 / JCM 21226 / LMG 7866 / NBRC 102419 / NCTC 12128 / CDC 0568-73).